A 177-amino-acid chain; its full sequence is Large ribosomal subunit protein uL16 (177 aa).

It belongs to the universal ribosomal protein uL16 family.

This is Large ribosomal subunit protein uL16 from Natronomonas pharaonis (strain ATCC 35678 / DSM 2160 / CIP 103997 / JCM 8858 / NBRC 14720 / NCIMB 2260 / Gabara) (Halobacterium pharaonis).